We begin with the raw amino-acid sequence, 352 residues long: Cyclin-dependent kinase-like 1 (352 aa).

Residues 4 to 287 (YEKIGKIGEG…CEQLLQHPYF (284 aa)) enclose the Protein kinase domain. ATP-binding positions include 10-18 (IGEGSYGVV) and Lys33. A [NKR]KIAxRE motif is present at residues 45–51 (KKIALRE). Asp126 (proton acceptor) is an active-site residue.

It belongs to the protein kinase superfamily. CMGC Ser/Thr protein kinase family. CDC2/CDKX subfamily.

It localises to the cytoplasm. Its subcellular location is the nucleus. The catalysed reaction is L-seryl-[protein] + ATP = O-phospho-L-seryl-[protein] + ADP + H(+). It carries out the reaction L-threonyl-[protein] + ATP = O-phospho-L-threonyl-[protein] + ADP + H(+). In Rattus norvegicus (Rat), this protein is Cyclin-dependent kinase-like 1.